The primary structure comprises 499 residues: UDP-N-acetylmuramoyl-L-alanyl-D-glutamate--2,6-diaminopimelate ligase (499 aa).

UDP-N-acetyl-alpha-D-muramoyl-L-alanyl-D-glutamate contacts are provided by leucine 30 and serine 32. An ATP-binding site is contributed by glycine 122 to threonine 128. Residues threonine 164–threonine 165, serine 191, glutamine 197, and arginine 199 contribute to the UDP-N-acetyl-alpha-D-muramoyl-L-alanyl-D-glutamate site. Position 231 is an N6-carboxylysine (lysine 231). Meso-2,6-diaminopimelate contacts are provided by residues arginine 397, aspartate 421 to arginine 424, glycine 472, and glutamate 476. A Meso-diaminopimelate recognition motif motif is present at residues aspartate 421–arginine 424.

This sequence belongs to the MurCDEF family. MurE subfamily. The cofactor is Mg(2+). Carboxylation is probably crucial for Mg(2+) binding and, consequently, for the gamma-phosphate positioning of ATP.

It localises to the cytoplasm. It carries out the reaction UDP-N-acetyl-alpha-D-muramoyl-L-alanyl-D-glutamate + meso-2,6-diaminopimelate + ATP = UDP-N-acetyl-alpha-D-muramoyl-L-alanyl-gamma-D-glutamyl-meso-2,6-diaminopimelate + ADP + phosphate + H(+). The protein operates within cell wall biogenesis; peptidoglycan biosynthesis. In terms of biological role, catalyzes the addition of meso-diaminopimelic acid to the nucleotide precursor UDP-N-acetylmuramoyl-L-alanyl-D-glutamate (UMAG) in the biosynthesis of bacterial cell-wall peptidoglycan. The sequence is that of UDP-N-acetylmuramoyl-L-alanyl-D-glutamate--2,6-diaminopimelate ligase from Blochmanniella floridana.